A 255-amino-acid polypeptide reads, in one-letter code: Methylthioribulose-1-phosphate dehydratase (255 aa).

Residue C98 coordinates substrate. The Zn(2+) site is built by H116 and H118. E150 serves as the catalytic Proton donor/acceptor. H207 contacts Zn(2+).

This sequence belongs to the aldolase class II family. MtnB subfamily. The cofactor is Zn(2+).

The protein localises to the cytoplasm. It carries out the reaction 5-(methylsulfanyl)-D-ribulose 1-phosphate = 5-methylsulfanyl-2,3-dioxopentyl phosphate + H2O. It functions in the pathway amino-acid biosynthesis; L-methionine biosynthesis via salvage pathway; L-methionine from S-methyl-5-thio-alpha-D-ribose 1-phosphate: step 2/6. Catalyzes the dehydration of methylthioribulose-1-phosphate (MTRu-1-P) into 2,3-diketo-5-methylthiopentyl-1-phosphate (DK-MTP-1-P). The sequence is that of Methylthioribulose-1-phosphate dehydratase from Pyricularia oryzae (strain 70-15 / ATCC MYA-4617 / FGSC 8958) (Rice blast fungus).